A 137-amino-acid chain; its full sequence is Large ribosomal subunit protein uL16 (137 aa).

Belongs to the universal ribosomal protein uL16 family. As to quaternary structure, part of the 50S ribosomal subunit.

Binds 23S rRNA and is also seen to make contacts with the A and possibly P site tRNAs. In Ectopseudomonas mendocina (strain ymp) (Pseudomonas mendocina), this protein is Large ribosomal subunit protein uL16.